A 190-amino-acid polypeptide reads, in one-letter code: Large ribosomal subunit protein uL5 (190 aa).

Belongs to the universal ribosomal protein uL5 family. In terms of assembly, part of the 50S ribosomal subunit; part of the 5S rRNA/L5/L18/L25 subcomplex. Contacts the 5S rRNA and the P site tRNA. Forms a bridge to the 30S subunit in the 70S ribosome.

Functionally, this is one of the proteins that bind and probably mediate the attachment of the 5S RNA into the large ribosomal subunit, where it forms part of the central protuberance. In the 70S ribosome it contacts protein S13 of the 30S subunit (bridge B1b), connecting the 2 subunits; this bridge is implicated in subunit movement. Contacts the P site tRNA; the 5S rRNA and some of its associated proteins might help stabilize positioning of ribosome-bound tRNAs. In Bifidobacterium longum (strain DJO10A), this protein is Large ribosomal subunit protein uL5.